The sequence spans 523 residues: GMP synthase [glutamine-hydrolyzing] (523 aa).

One can recognise a Glutamine amidotransferase type-1 domain in the interval 8–205; sequence KILILDFGSQ…VVNICGCETK (198 aa). Catalysis depends on cysteine 85, which acts as the Nucleophile. Catalysis depends on residues histidine 179 and glutamate 181. Positions 206–398 constitute a GMPS ATP-PPase domain; the sequence is WTAENIIEDA…LGLPAEMINR (193 aa). An ATP-binding site is contributed by 233 to 239; sequence SGGVDSS.

In terms of assembly, homodimer.

The enzyme catalyses XMP + L-glutamine + ATP + H2O = GMP + L-glutamate + AMP + diphosphate + 2 H(+). It participates in purine metabolism; GMP biosynthesis; GMP from XMP (L-Gln route): step 1/1. In terms of biological role, catalyzes the synthesis of GMP from XMP. This is GMP synthase [glutamine-hydrolyzing] from Haemophilus influenzae (strain 86-028NP).